Reading from the N-terminus, the 234-residue chain is Glutathione S-transferase 1 (234 aa).

Residues 3–90 form the GST N-terminal domain; sequence LPIIKVHWLD…YVLQHFDHSH (88 aa). In terms of domain architecture, GST C-terminal spans 96–234; that stretch reads DADIADQINY…EKARALGSNF (139 aa).

This sequence belongs to the GST superfamily. In terms of assembly, homodimer.

It is found in the endoplasmic reticulum membrane. It carries out the reaction RX + glutathione = an S-substituted glutathione + a halide anion + H(+). In Saccharomyces cerevisiae (strain ATCC 204508 / S288c) (Baker's yeast), this protein is Glutathione S-transferase 1 (GTT1).